Here is a 364-residue protein sequence, read N- to C-terminus: Protein-glutamate methylesterase/protein-glutamine glutaminase 3 (364 aa).

Residues 7-124 (RVLIVDDSAS…THALLEASAR (118 aa)) enclose the Response regulatory domain. Aspartate 58 is modified (4-aspartylphosphate). A CheB-type methylesterase domain is found at 167–358 (PTTERLVCIG…REIMLWQDAK (192 aa)). Active-site residues include serine 178, histidine 204, and aspartate 300.

It belongs to the CheB family. Phosphorylated by CheA. Phosphorylation of the N-terminal regulatory domain activates the methylesterase activity.

The protein localises to the cytoplasm. The catalysed reaction is [protein]-L-glutamate 5-O-methyl ester + H2O = L-glutamyl-[protein] + methanol + H(+). It catalyses the reaction L-glutaminyl-[protein] + H2O = L-glutamyl-[protein] + NH4(+). Its function is as follows. Involved in chemotaxis. Part of a chemotaxis signal transduction system that modulates chemotaxis in response to various stimuli. Catalyzes the demethylation of specific methylglutamate residues introduced into the chemoreceptors (methyl-accepting chemotaxis proteins or MCP) by CheR. Also mediates the irreversible deamidation of specific glutamine residues to glutamic acid. This chain is Protein-glutamate methylesterase/protein-glutamine glutaminase 3, found in Rhodopseudomonas palustris (strain BisB18).